The sequence spans 137 residues: Large ribosomal subunit protein uL16 (137 aa).

This sequence belongs to the universal ribosomal protein uL16 family. In terms of assembly, part of the 50S ribosomal subunit.

Functionally, binds 23S rRNA and is also seen to make contacts with the A and possibly P site tRNAs. The sequence is that of Large ribosomal subunit protein uL16 from Streptococcus sanguinis (strain SK36).